The following is a 397-amino-acid chain: Elongation factor Tu-1 (397 aa).

The tr-type G domain maps to 10–206 (KPHVNIGTIG…AVDESIPEPE (197 aa)). The interval 19 to 26 (GHIDHGKT) is G1. Residue 19-26 (GHIDHGKT) participates in GTP binding. Thr-26 lines the Mg(2+) pocket. The tract at residues 62 to 66 (GITIS) is G2. The G3 stretch occupies residues 83-86 (DCPG). GTP-binding positions include 83–87 (DCPGH) and 138–141 (NKAD). A G4 region spans residues 138–141 (NKAD). The interval 176 to 178 (SAL) is G5.

This sequence belongs to the TRAFAC class translation factor GTPase superfamily. Classic translation factor GTPase family. EF-Tu/EF-1A subfamily. As to quaternary structure, monomer.

It localises to the cytoplasm. It carries out the reaction GTP + H2O = GDP + phosphate + H(+). Functionally, GTP hydrolase that promotes the GTP-dependent binding of aminoacyl-tRNA to the A-site of ribosomes during protein biosynthesis. This is Elongation factor Tu-1 from Streptomyces ramocissimus.